The chain runs to 312 residues: Ribosomal protein L11 methyltransferase (312 aa).

The S-adenosyl-L-methionine site is built by Thr162, Gly183, Asp205, and Asn248.

Belongs to the methyltransferase superfamily. PrmA family.

The protein localises to the cytoplasm. The catalysed reaction is L-lysyl-[protein] + 3 S-adenosyl-L-methionine = N(6),N(6),N(6)-trimethyl-L-lysyl-[protein] + 3 S-adenosyl-L-homocysteine + 3 H(+). Functionally, methylates ribosomal protein L11. This chain is Ribosomal protein L11 methyltransferase, found in Bacillus cytotoxicus (strain DSM 22905 / CIP 110041 / 391-98 / NVH 391-98).